The following is a 251-amino-acid chain: Ubiquinone/menaquinone biosynthesis C-methyltransferase UbiE (251 aa).

S-adenosyl-L-methionine-binding positions include T74, D95, 123 to 124, and S140; that span reads NA.

This sequence belongs to the class I-like SAM-binding methyltransferase superfamily. MenG/UbiE family.

The enzyme catalyses a 2-demethylmenaquinol + S-adenosyl-L-methionine = a menaquinol + S-adenosyl-L-homocysteine + H(+). It catalyses the reaction a 2-methoxy-6-(all-trans-polyprenyl)benzene-1,4-diol + S-adenosyl-L-methionine = a 5-methoxy-2-methyl-3-(all-trans-polyprenyl)benzene-1,4-diol + S-adenosyl-L-homocysteine + H(+). The protein operates within quinol/quinone metabolism; menaquinone biosynthesis; menaquinol from 1,4-dihydroxy-2-naphthoate: step 2/2. It functions in the pathway cofactor biosynthesis; ubiquinone biosynthesis. Methyltransferase required for the conversion of demethylmenaquinol (DMKH2) to menaquinol (MKH2) and the conversion of 2-polyprenyl-6-methoxy-1,4-benzoquinol (DDMQH2) to 2-polyprenyl-3-methyl-6-methoxy-1,4-benzoquinol (DMQH2). The chain is Ubiquinone/menaquinone biosynthesis C-methyltransferase UbiE from Serratia proteamaculans (strain 568).